The primary structure comprises 767 residues: Polyribonucleotide nucleotidyltransferase (767 aa).

Residues Asp509 and Asp515 each coordinate Mg(2+). The KH domain occupies 575–634; it reads PRILTVKVPIDKIGEVIGPKGKMINSIQDETGAEITIEDDGTIYIGATDGPSAEAARDAI. Positions 646–718 constitute an S1 motif domain; the sequence is GERYLGTVVK…ERGKLSLVPV (73 aa). The disordered stretch occupies residues 725–767; that stretch reads AVAAPNGGESPNGAKKTDASGNGAKQPRRRRRTRSSSRSSENT. The span at 750-759 shows a compositional bias: basic residues; that stretch reads QPRRRRRTRS.

It belongs to the polyribonucleotide nucleotidyltransferase family. The cofactor is Mg(2+).

It localises to the cytoplasm. It carries out the reaction RNA(n+1) + phosphate = RNA(n) + a ribonucleoside 5'-diphosphate. In terms of biological role, involved in mRNA degradation. Catalyzes the phosphorolysis of single-stranded polyribonucleotides processively in the 3'- to 5'-direction. The polypeptide is Polyribonucleotide nucleotidyltransferase (Thermobifida fusca (strain YX)).